The following is a 729-amino-acid chain: Solute carrier family 15 member 2 (729 aa).

The tract at residues 1–35 (MNPFQKNESKETLFSPVSTEEMLPRPPSPPKKSPP) is disordered. The Cytoplasmic portion of the chain corresponds to 1–57 (MNPFQKNESKETLFSPVSTEEMLPRPPSPPKKSPPKIFGSSYPVSIAFIVVNEFCER). The residue at position 9 (serine 9) is a Phosphoserine. Threonine 12 carries the post-translational modification Phosphothreonine. A Phosphoserine modification is found at serine 28. A helical transmembrane segment spans residues 58–78 (FSYYGMKAVLTLYFLYFLHWN). Residues 79 to 87 (EDTSTSVYH) are Extracellular-facing. The chain crosses the membrane as a helical span at residues 88–108 (AFSSLCYFTPILGAAIADSWL). The Cytoplasmic portion of the chain corresponds to 109–113 (GKFKT). Residues 114-134 (IIYLSLVYVLGHVFKSLGAIP) traverse the membrane as a helical segment. Residues 135–139 (ILGGK) lie on the Extracellular side of the membrane. A helical membrane pass occupies residues 140–160 (MLHTILSLVGLSLIALGTGGI). The Cytoplasmic portion of the chain corresponds to 161–183 (KPCVAAFGGDQFEEEHAEARTRY). Residues 184–204 (FSVFYLAINAGSLISTFITPM) traverse the membrane as a helical segment. The Extracellular portion of the chain corresponds to 205–217 (LRGDVKCFGQDCY). A helical transmembrane segment spans residues 218–238 (ALAFGVPGLLMVLALVVFAMG). Over 239–295 (SKMYRKPPPEGNIVAQVIKCIWFALCNRFRNRSGDLPKRQHWLDWAAEKYPKHLIAD) the chain is Cytoplasmic. Residues 296 to 316 (VKALTRVLFLYIPLPMFWALL) traverse the membrane as a helical segment. Residues 317–343 (DQQGSRWTLQANKMNGDLGFFVLQPDQ) are Extracellular-facing. A helical transmembrane segment spans residues 344–364 (MQVLNPFLVLIFIPLFDLVIY). At 365–380 (RLISKCRINFSSLRKM) the chain is on the cytoplasmic side. Residues 381–401 (AVGMILACLAFAVAALVETKI) traverse the membrane as a helical segment. Residues 402-611 (NGMIHPQPAS…PVNKLSIAWQ (210 aa)) lie on the Extracellular side of the membrane. Residues 402-611 (NGMIHPQPAS…PVNKLSIAWQ (210 aa)) form an extracellular domain (ECD) region. 4 N-linked (GlcNAc...) asparagine glycosylation sites follow: asparagine 435, asparagine 448, asparagine 528, and asparagine 587. The helical transmembrane segment at 612–632 (LPQYVLVTAAEVMFSVTGLEF) threads the bilayer. Over 633 to 643 (SYSQAPSSMKS) the chain is Cytoplasmic. Residues 644 to 664 (VLQAAWLLTVAVGNIIVLVVA) form a helical membrane-spanning segment. Topologically, residues 665 to 674 (QFSGLAQWAE) are extracellular. A helical transmembrane segment spans residues 675 to 695 (FVLFSCLLLVVCLIFSVMAYY). At 696–729 (YVPLKSEDTREATDKQIPAVQGNMINLETKNTRL) the chain is on the cytoplasmic side.

This sequence belongs to the major facilitator superfamily. Proton-dependent oligopeptide transporter (POT/PTR) (TC 2.A.17) family. Interacts (via extracellular domain region) with trypsin. As to expression, strongly expressed in kidney cortex and medulla. Also detected in brain, lung and spleen. Expressed in choroid plexus.

The protein resides in the apical cell membrane. The protein localises to the cytoplasmic vesicle. Its subcellular location is the phagosome membrane. It is found in the cell membrane. The enzyme catalyses a dipeptide(out) + 2 H(+)(out) = a dipeptide(in) + 2 H(+)(in). It carries out the reaction glycyl-L-leucine(out) + 2 H(+)(out) = glycyl-L-leucine(in) + 2 H(+)(in). The catalysed reaction is glycyl-L-lysine(out) + 2 H(+)(out) = glycyl-L-lysine(in) + 2 H(+)(in). It catalyses the reaction glycyl-L-glutamate(out) + 3 H(+)(out) = glycyl-L-glutamate(in) + 3 H(+)(in). The enzyme catalyses L-alanyl-L-alanine(out) + 2 H(+)(out) = L-alanyl-L-alanine(in) + 2 H(+)(in). It carries out the reaction an L-amino acid tripeptide(out) + 2 H(+)(out) = an L-amino acid tripeptide(in) + 2 H(+)(in). The catalysed reaction is N-acetyl-D-muramoyl-L-alanyl-D-isoglutamine(out) + 3 H(+)(out) = N-acetyl-D-muramoyl-L-alanyl-D-isoglutamine(in) + 3 H(+)(in). It catalyses the reaction carnosine(out) + 2 H(+)(out) = carnosine(in) + 2 H(+)(in). In terms of biological role, proton-coupled amino-acid transporter that transports oligopeptides of 2 to 4 amino acids with a preference for dipeptides. Transports neutral and anionic dipeptides with a proton to peptide stoichiometry of 2:1 or 3:1. In kidney, involved in the absorption of circulating di- and tripeptides from the glomerular filtrate. Can also transport beta-lactam antibiotics, such as the aminocephalosporin cefadroxil, and other antiviral and anticancer drugs. Transports the dipeptide-like aminopeptidase inhibitor bestatin. Also able to transport carnosine. Involved in innate immunity by promoting the detection of microbial pathogens by NOD-like receptors (NLRs). Mediates transport of bacterial peptidoglycans across the plasma membrane or, in macrophages, the phagosome membrane: catalyzes the transport of certain bacterial peptidoglycans, such as muramyl dipeptide (MDP), the NOD2 ligand. The sequence is that of Solute carrier family 15 member 2 from Rattus norvegicus (Rat).